Reading from the N-terminus, the 161-residue chain is 2-C-methyl-D-erythritol 2,4-cyclodiphosphate synthase (161 aa).

Residues Asp-11 and His-13 each contribute to the a divalent metal cation site. Residues 11-13 (DIH) and 37-38 (HS) each bind 4-CDP-2-C-methyl-D-erythritol 2-phosphate. A divalent metal cation is bound at residue His-45. 4-CDP-2-C-methyl-D-erythritol 2-phosphate-binding positions include 59-61 (DIG), 135-138 (TTNE), and Arg-145.

Belongs to the IspF family. As to quaternary structure, homotrimer. A divalent metal cation serves as cofactor.

It carries out the reaction 4-CDP-2-C-methyl-D-erythritol 2-phosphate = 2-C-methyl-D-erythritol 2,4-cyclic diphosphate + CMP. The protein operates within isoprenoid biosynthesis; isopentenyl diphosphate biosynthesis via DXP pathway; isopentenyl diphosphate from 1-deoxy-D-xylulose 5-phosphate: step 4/6. Its function is as follows. Involved in the biosynthesis of isopentenyl diphosphate (IPP) and dimethylallyl diphosphate (DMAPP), two major building blocks of isoprenoid compounds. Catalyzes the conversion of 4-diphosphocytidyl-2-C-methyl-D-erythritol 2-phosphate (CDP-ME2P) to 2-C-methyl-D-erythritol 2,4-cyclodiphosphate (ME-CPP) with a corresponding release of cytidine 5-monophosphate (CMP). In Thermosynechococcus vestitus (strain NIES-2133 / IAM M-273 / BP-1), this protein is 2-C-methyl-D-erythritol 2,4-cyclodiphosphate synthase.